The sequence spans 106 residues: Thioredoxin (106 aa).

The Thioredoxin domain occupies 1 to 106 (GATVKVTNAT…RLAAFLDASL (106 aa)). A disulfide bridge connects residues cysteine 31 and cysteine 34.

The protein belongs to the thioredoxin family.

Functionally, participates in various redox reactions through the reversible oxidation of its active center dithiol to a disulfide and catalyzes dithiol-disulfide exchange reactions. The chain is Thioredoxin (trxA) from Kitasatospora aureofaciens (Streptomyces aureofaciens).